An 89-amino-acid polypeptide reads, in one-letter code: Acylphosphatase (89 aa).

Residues 3–89 enclose the Acylphosphatase-like domain; it reads ALFIKISGRV…QNFTSFDIVP (87 aa). Catalysis depends on residues Arg18 and Asn36.

This sequence belongs to the acylphosphatase family.

The catalysed reaction is an acyl phosphate + H2O = a carboxylate + phosphate + H(+). This Pseudothermotoga lettingae (strain ATCC BAA-301 / DSM 14385 / NBRC 107922 / TMO) (Thermotoga lettingae) protein is Acylphosphatase (acyP).